We begin with the raw amino-acid sequence, 238 residues long: tRNA (guanine-N(7)-)-methyltransferase (238 aa).

S-adenosyl-L-methionine-binding residues include Glu71, Glu96, Asp123, and Asp146. Asp146 is an active-site residue. Substrate-binding positions include Lys150, Asp182, and 217-220 (TKFE).

It belongs to the class I-like SAM-binding methyltransferase superfamily. TrmB family.

It catalyses the reaction guanosine(46) in tRNA + S-adenosyl-L-methionine = N(7)-methylguanosine(46) in tRNA + S-adenosyl-L-homocysteine. Its pathway is tRNA modification; N(7)-methylguanine-tRNA biosynthesis. In terms of biological role, catalyzes the formation of N(7)-methylguanine at position 46 (m7G46) in tRNA. This is tRNA (guanine-N(7)-)-methyltransferase from Methylobacillus flagellatus (strain ATCC 51484 / DSM 6875 / VKM B-1610 / KT).